The sequence spans 286 residues: ATP synthase gamma chain (286 aa).

The protein belongs to the ATPase gamma chain family. As to quaternary structure, F-type ATPases have 2 components, CF(1) - the catalytic core - and CF(0) - the membrane proton channel. CF(1) has five subunits: alpha(3), beta(3), gamma(1), delta(1), epsilon(1). CF(0) has three main subunits: a, b and c.

The protein localises to the cell inner membrane. In terms of biological role, produces ATP from ADP in the presence of a proton gradient across the membrane. The gamma chain is believed to be important in regulating ATPase activity and the flow of protons through the CF(0) complex. This Teredinibacter turnerae (strain ATCC 39867 / T7901) protein is ATP synthase gamma chain.